The primary structure comprises 20 residues: Lysozyme (20 aa).

As to quaternary structure, monomer.

It localises to the secreted. It carries out the reaction Hydrolysis of (1-&gt;4)-beta-linkages between N-acetylmuramic acid and N-acetyl-D-glucosamine residues in a peptidoglycan and between N-acetyl-D-glucosamine residues in chitodextrins.. Its function is as follows. Has bacteriolytic activity. This is Lysozyme from Lysobacter sp. (strain XL1).